Here is a 266-residue protein sequence, read N- to C-terminus: Glucosamine-6-phosphate deaminase (266 aa).

The Proton acceptor; for enolization step role is filled by Asp-72. Residue Asp-141 is the For ring-opening step of the active site. His-143 acts as the Proton acceptor; for ring-opening step in catalysis. The active-site For ring-opening step is the Glu-148.

This sequence belongs to the glucosamine/galactosamine-6-phosphate isomerase family. NagB subfamily. As to quaternary structure, homohexamer.

It catalyses the reaction alpha-D-glucosamine 6-phosphate + H2O = beta-D-fructose 6-phosphate + NH4(+). The protein operates within amino-sugar metabolism; N-acetylneuraminate degradation; D-fructose 6-phosphate from N-acetylneuraminate: step 5/5. With respect to regulation, allosterically activated by N-acetylglucosamine 6-phosphate (GlcNAc6P). Functionally, catalyzes the reversible isomerization-deamination of glucosamine 6-phosphate (GlcN6P) to form fructose 6-phosphate (Fru6P) and ammonium ion. In Edwardsiella ictaluri (strain 93-146), this protein is Glucosamine-6-phosphate deaminase.